The following is a 381-amino-acid chain: MATPYREKIEKMSSEVIDSNPYSRLMALKKMGIVNNYENIRNLSVIIVGLGGIGSVAAEMLTRCGIGKLLLFDYDTVEIANMNRLFFRPEQSGKSKTMAAQETLSSINPDVQFESHNYNITTIDNFEHFKGRIEKGGLVEGEPVDLVLGCVDNFEARTAINQACLELGKSWMESGVSENAISGHIQLIIPGESACFQCVPPLIVASGIDERTLKREGVCAASLPTTMGIVAGMLVQNTLKYLLKFGEVSSLLGYNALLDYFPKDNMKPNPECSNSFCIIHQQKYKEFLKNNPKENLIQNNNNNNINNNEKKSTYENEWGIELIETSEDFNNNNNNNNKPSNNSFEFSYDKKPTVELNEQSTVKVNSSSNLEDLMNQLKNMK.

Residues glycine 52, aspartate 73, lysine 96, asparagine 119, and asparagine 153 each contribute to the ATP site. Zn(2+) contacts are provided by cysteine 195 and cysteine 198. The Glycyl thioester intermediate role is filled by cysteine 219. Residues cysteine 272 and cysteine 277 each contribute to the Zn(2+) site.

It belongs to the ubiquitin-activating E1 family. UBA5 subfamily.

Functionally, E1-like enzyme which activates ufm1. In Dictyostelium discoideum (Social amoeba), this protein is Ubiquitin-like modifier-activating enzyme 5 (uba5).